A 203-amino-acid polypeptide reads, in one-letter code: LexA repressor (203 aa).

Residues 29–49 constitute a DNA-binding region (H-T-H motif); the sequence is VREIGQEVGLSSSSTVHGYLK. Active-site for autocatalytic cleavage activity residues include Ser126 and Lys163.

The protein belongs to the peptidase S24 family. Homodimer.

It catalyses the reaction Hydrolysis of Ala-|-Gly bond in repressor LexA.. Functionally, represses a number of genes involved in the response to DNA damage (SOS response), including recA and lexA. In the presence of single-stranded DNA, RecA interacts with LexA causing an autocatalytic cleavage which disrupts the DNA-binding part of LexA, leading to derepression of the SOS regulon and eventually DNA repair. This chain is LexA repressor, found in Pelotomaculum thermopropionicum (strain DSM 13744 / JCM 10971 / SI).